Here is a 277-residue protein sequence, read N- to C-terminus: Phosphonates import ATP-binding protein PhnC 2 (277 aa).

The ABC transporter domain maps to 3–251; that stretch reads ISLNGISVQH…LLQALYAQHL (249 aa). 40–47 lines the ATP pocket; the sequence is GPSGAGKT.

It belongs to the ABC transporter superfamily. Phosphonates importer (TC 3.A.1.9.1) family. As to quaternary structure, the complex is composed of two ATP-binding proteins (PhnC), two transmembrane proteins (PhnE) and a solute-binding protein (PhnD).

Its subcellular location is the cell inner membrane. It carries out the reaction phosphonate(out) + ATP + H2O = phosphonate(in) + ADP + phosphate + H(+). In terms of biological role, part of the ABC transporter complex PhnCDE involved in phosphonates import. Responsible for energy coupling to the transport system. This chain is Phosphonates import ATP-binding protein PhnC 2, found in Albidiferax ferrireducens (strain ATCC BAA-621 / DSM 15236 / T118) (Rhodoferax ferrireducens).